A 422-amino-acid polypeptide reads, in one-letter code: MVDLEAIGRRAKTAARALAKLSTEQKNAALCAIADGLLARQDKILAANAADVADAEKGGTPPAIVDRMLLTPARLAAIAGDCRQVASLPDPVGEIFDRRELPSGLRLYKRRVPIGVIGAIYEARPNVTVDIASLCLKAGNAVILRGGSDIARSVAATTEVIALALEQAGLPAFAVQSIIDPDRELVRQLLRLDRYVDMIIPRGGAGLHRFCVENATVPVIVGGMGVSHIYVEPSADFARAVPVIVNAKVQRPGACNALDTLLVHRAAASTFLPLVAAALAQHGVELRCDLEALAILADAPGHEAWNLKPASPTDFGCEFLALIVAIKIVGSIDEALDHIALYGGHSEAILTGDPISAERFTREVDATAVFVNASTRFNDGGQFGLGAEVAISTNRLHARGPMGLQELTTYTWIGEGDYLVRA.

The protein belongs to the gamma-glutamyl phosphate reductase family.

It is found in the cytoplasm. The catalysed reaction is L-glutamate 5-semialdehyde + phosphate + NADP(+) = L-glutamyl 5-phosphate + NADPH + H(+). It participates in amino-acid biosynthesis; L-proline biosynthesis; L-glutamate 5-semialdehyde from L-glutamate: step 2/2. Its function is as follows. Catalyzes the NADPH-dependent reduction of L-glutamate 5-phosphate into L-glutamate 5-semialdehyde and phosphate. The product spontaneously undergoes cyclization to form 1-pyrroline-5-carboxylate. The polypeptide is Gamma-glutamyl phosphate reductase (Chloroflexus aurantiacus (strain ATCC 29366 / DSM 635 / J-10-fl)).